The chain runs to 179 residues: Large ribosomal subunit protein uL5 (179 aa).

This sequence belongs to the universal ribosomal protein uL5 family. Part of the 50S ribosomal subunit; part of the 5S rRNA/L5/L18/L25 subcomplex. Contacts the 5S rRNA and the P site tRNA. Forms a bridge to the 30S subunit in the 70S ribosome.

Functionally, this is one of the proteins that bind and probably mediate the attachment of the 5S RNA into the large ribosomal subunit, where it forms part of the central protuberance. In the 70S ribosome it contacts protein S13 of the 30S subunit (bridge B1b), connecting the 2 subunits; this bridge is implicated in subunit movement. Contacts the P site tRNA; the 5S rRNA and some of its associated proteins might help stabilize positioning of ribosome-bound tRNAs. The chain is Large ribosomal subunit protein uL5 from Glaesserella parasuis serovar 5 (strain SH0165) (Haemophilus parasuis).